The chain runs to 82 residues: MKLTCVMIVAVLFLTAWTVVTAEPHSSNVLENLYLKAHHEMENPEASKLNTRDRCQRANFVCDAFHHAAVCCEGVCVLVCAW.

Residues 1–22 (MKLTCVMIVAVLFLTAWTVVTA) form the signal peptide. A propeptide spanning residues 23 to 53 (EPHSSNVLENLYLKAHHEMENPEASKLNTRD) is cleaved from the precursor. Intrachain disulfides connect C55–C72, C62–C76, and C71–C80.

Belongs to the conotoxin O1 superfamily. As to expression, expressed by the venom duct.

It is found in the secreted. This chain is Conotoxin C11GB, found in Conus vexillum (Flag cone).